The primary structure comprises 334 residues: Biotin synthase (334 aa).

In terms of domain architecture, Radical SAM core spans 55-285 (GSSGSIHACS…VHPRKIIKIA (231 aa)). [4Fe-4S] cluster-binding residues include cysteine 73, cysteine 77, and cysteine 80. [2Fe-2S] cluster contacts are provided by cysteine 152, cysteine 213, and lysine 283.

This sequence belongs to the radical SAM superfamily. Biotin synthase family. In terms of assembly, homodimer. The cofactor is [4Fe-4S] cluster. Requires [2Fe-2S] cluster as cofactor.

It carries out the reaction (4R,5S)-dethiobiotin + (sulfur carrier)-SH + 2 reduced [2Fe-2S]-[ferredoxin] + 2 S-adenosyl-L-methionine = (sulfur carrier)-H + biotin + 2 5'-deoxyadenosine + 2 L-methionine + 2 oxidized [2Fe-2S]-[ferredoxin]. Its pathway is cofactor biosynthesis; biotin biosynthesis; biotin from 7,8-diaminononanoate: step 2/2. Its function is as follows. Catalyzes the conversion of dethiobiotin (DTB) to biotin by the insertion of a sulfur atom into dethiobiotin via a radical-based mechanism. The polypeptide is Biotin synthase (Chlorobium phaeobacteroides (strain DSM 266 / SMG 266 / 2430)).